Reading from the N-terminus, the 499-residue chain is L-asparagine permease (499 aa).

Transmembrane regions (helical) follow at residues 34–54 (QVQMIAIGGAIGTGLFLGAGA), 58–78 (MAGPALALVYLICGLFSFFIL), 109–129 (VAGWMYFINWAMTGIVDITAV), 146–166 (VFALAALTIVGTMNMIGVKWF), 171–191 (FWFALIKVLAIVTFLVVGTVF), 219–239 (LLPALVLIQGVVFAFASIEMV), 264–284 (IGLFYVGSVVLLVMLLPWSAY), 298–318 (LGVPYIGSIMNIVVLTAALSS), 353–373 (YAGILATLVVYVVGVFLNYLV), 378–398 (FEIVLNFASLGIIASWAFIIV), 422–442 (APFTSWLTLLFLLSVLVLMAF), and 448–468 (TYTIAALPIIGILLVIGWFGV).

The protein belongs to the amino acid-polyamine-organocation (APC) superfamily. Amino acid transporter (AAT) (TC 2.A.3.1) family.

The protein resides in the cell inner membrane. The polypeptide is L-asparagine permease (ansP) (Escherichia coli (strain K12)).